The primary structure comprises 493 residues: MESVRVRFAPSPTGFVHIGSLRTALYNYLFARKNQGKYILRVEDTDQSRFVEGAIEGMLKSMDWAGVSHNEGVVLEEETLKQQGQYGPYIQSERLPIYQEHITKLLEEGHAYHCFCSKERLDEVREKQKAAGETAKYDGHCRENPKEMVREKIEAGESYVIRLKLPENRDIEFNDIVRGKVTMNTGDLDDQVLIKSDGFPTYHFAVVVDDHLMEITHVIRGEEWLPSTPKHVYLYEVMGWQAPQYVHLPNILNTERKKLSKRQGDVAVGDFMRKGYLPEALVNYIALVGWSPEDNQEIFSMTELEENFSLERVSKSGGVFDVNKLNWINNHYIKESTADRIVDLAIPYLIEAGYVTEAEVGKKYDWLKDLVGVLKERLDYVADIVNHVDIFFKTAIEPKSDEAREILKEAHLPELLEAFLEKVEAAEVIDDAFGKKALKEIQKEKGFKGPKLFKPIRVALTGEEHGPDLPLIIKVLGKENLKSRIQYVKEHLI.

Residues P10–S20 carry the 'HIGH' region motif. Zn(2+) contacts are provided by C114, C116, C141, and E143. The 'KMSKS' region signature appears at K258–R262. ATP is bound at residue K261.

It belongs to the class-I aminoacyl-tRNA synthetase family. Glutamate--tRNA ligase type 1 subfamily. Monomer. It depends on Zn(2+) as a cofactor.

Its subcellular location is the cytoplasm. The catalysed reaction is tRNA(Glu) + L-glutamate + ATP = L-glutamyl-tRNA(Glu) + AMP + diphosphate. Catalyzes the attachment of glutamate to tRNA(Glu) in a two-step reaction: glutamate is first activated by ATP to form Glu-AMP and then transferred to the acceptor end of tRNA(Glu). The polypeptide is Glutamate--tRNA ligase (Alkaliphilus metalliredigens (strain QYMF)).